We begin with the raw amino-acid sequence, 324 residues long: Tumor necrosis factor receptor superfamily member 6 (324 aa).

An N-terminal signal peptide occupies residues 1-21 (MLWIMAVLPLVLAGPELNVRM). The Extracellular segment spans residues 22 to 171 (QGTDSIFEGL…CKKQSSNYKL (150 aa)). N-linked (GlcNAc...) asparagine glycosylation occurs at Asn-43. 3 TNFR-Cys repeats span residues 43-79 (NCSEGLYQVGPFCCQPCQPGERKVKDCTTSGGAPTCH), 80-123 (PCTE…NTKC), and 124-163 (RCKENFYCNASLCDHCYHCTSCGLEDILEPCTRTSNTKCK). Intrachain disulfides connect Cys-44–Cys-55, Cys-56–Cys-69, Cys-59–Cys-78, Cys-81–Cys-97, Cys-100–Cys-115, Cys-103–Cys-123, Cys-125–Cys-139, Cys-142–Cys-154, and Cys-145–Cys-162. Residues Asn-114 and Asn-132 are each glycosylated (N-linked (GlcNAc...) asparagine). The helical transmembrane segment at 172 to 188 (LWLLILPGLAILFVFIY) threads the bilayer. Residues 189–324 (KRYRKRQPGD…RNENEGQSLE (136 aa)) lie on the Cytoplasmic side of the membrane. The tract at residues 201-306 (SGIPSPESVP…EEIQAMVWED (106 aa)) is interaction with HIPK3. Residue Ser-214 is modified to Phosphoserine. The tract at residues 219–243 (NKYIWRTAEKMKICDAKKFARQHKI) is interaction with CALM. One can recognise a Death domain in the interval 219-303 (NKYIWRTAEK…DIAEEIQAMV (85 aa)).

Component of the death-induced signaling complex (DISC) composed of cell surface receptor FAS/CD95, adapter protein FADD and the CASP8 protease; recruitment of CASP8 to the complex is required for processing of CASP8 into the p18 and p10 subunits. Interacts directly (via DED domain) with NOL3 (via CARD domain); inhibits death-inducing signaling complex (DISC) assembly by inhibiting the increase in FAS-FADD binding induced by FAS activation. Binds DAXX. Interacts with HIPK3. Part of a complex containing HIPK3 and FADD. Binds RIPK1 and FAIM2. Interacts with BABAM2 and FEM1B. Interacts with CALM. In the absence of stimulation, interacts with BIRC2, DDX3X and GSK3B. The interaction with BIRC2 and DDX3X is further enhanced upon receptor stimulation and accompanied by DDX3X and BIRC2 cleavage. Post-translationally, palmitoylated. Palmitoylation by ZDHHC7 prevents the lysosomal degradation of FAS regulating its expression at the plasma membrane.

It localises to the cell membrane. Its subcellular location is the membrane raft. Receptor for TNFSF6/FASLG. The adapter molecule FADD recruits caspase CASP8 to the activated receptor. The resulting death-inducing signaling complex (DISC) performs CASP8 proteolytic activation which initiates the subsequent cascade of caspases (aspartate-specific cysteine proteases) mediating apoptosis. FAS-mediated apoptosis may have a role in the induction of peripheral tolerance, in the antigen-stimulated suicide of mature T-cells, or both. The protein is Tumor necrosis factor receptor superfamily member 6 (Fas) of Rattus norvegicus (Rat).